The following is a 324-amino-acid chain: Glutathione synthetase (324 aa).

In terms of domain architecture, ATP-grasp spans 133–317; it reads KMYALQFTKA…LAHQVIQWVE (185 aa). An ATP-binding site is contributed by 159 to 215; that stretch reads VEAKGATVLKPLGNKAGEGILFLQAGDRNFNSIVELSTQQGRLPVMVQTYLPEAKEG. The Mg(2+) site is built by Glu-288 and Asn-290.

Belongs to the prokaryotic GSH synthase family. Mg(2+) serves as cofactor. The cofactor is Mn(2+).

The enzyme catalyses gamma-L-glutamyl-L-cysteine + glycine + ATP = glutathione + ADP + phosphate + H(+). Its pathway is sulfur metabolism; glutathione biosynthesis; glutathione from L-cysteine and L-glutamate: step 2/2. This Nostoc sp. (strain PCC 7120 / SAG 25.82 / UTEX 2576) protein is Glutathione synthetase.